Consider the following 26-residue polypeptide: AMP deaminase 1 (26 aa).

It belongs to the metallo-dependent hydrolases superfamily. Adenosine and AMP deaminases family. In terms of assembly, homotetramer.

The catalysed reaction is AMP + H2O + H(+) = IMP + NH4(+). The protein operates within purine metabolism; IMP biosynthesis via salvage pathway; IMP from AMP: step 1/1. Functionally, AMP deaminase plays a critical role in energy metabolism. In Gallus gallus (Chicken), this protein is AMP deaminase 1 (AMPD1).